Consider the following 586-residue polypeptide: ATP-dependent lipid A-core flippase (586 aa).

Transmembrane regions (helical) follow at residues 25 to 45 (AYFIISFIGFGVFAAMEAQLI), 74 to 94 (LWFVPISVVVLSIIRGIGAYF), 163 to 183 (VAWFLAMMLIINWKLTLAFIC), and 264 to 284 (VLHIVLALALAVTFYLIMILW). The ABC transmembrane type-1 domain maps to 28–317 (IISFIGFGVF…LTKINSIIQK (290 aa)). The region spanning 349-583 (VELKDVHFGY…SGVYANLYHS (235 aa)) is the ABC transporter domain. 382 to 389 (GSSGSGKS) is an ATP binding site.

This sequence belongs to the ABC transporter superfamily. Lipid exporter (TC 3.A.1.106) family. As to quaternary structure, homodimer.

The protein localises to the cell inner membrane. It catalyses the reaction ATP + H2O + lipid A-core oligosaccharideSide 1 = ADP + phosphate + lipid A-core oligosaccharideSide 2.. Involved in lipopolysaccharide (LPS) biosynthesis. Translocates lipid A-core from the inner to the outer leaflet of the inner membrane. Transmembrane domains (TMD) form a pore in the inner membrane and the ATP-binding domain (NBD) is responsible for energy generation. In Saccharophagus degradans (strain 2-40 / ATCC 43961 / DSM 17024), this protein is ATP-dependent lipid A-core flippase.